Here is a 781-residue protein sequence, read N- to C-terminus: Catenin beta-1 (781 aa).

The segment at 34–56 is disordered; it reads GIHSGATTTAPSLSGKGNPEDED. ARM repeat units follow at residues 141 to 180, 225 to 264, 267 to 306, 351 to 390, 391 to 429, 432 to 473, 479 to 519, 521 to 562, 584 to 623, and 625 to 664; these read NYQDDAELATRAIPELTKLLNDEDQVVVNKAAVMVHQLSK, REGLLAIFKSGGIPALVKMLGSPVDSVLFYAITTLHNLLL, EGAKMAVRLAGGLQKMVALLNKTNVKFLAITTDCLQILAY, SSNKPAIVEAGGMQALGLHLTDSSQRLVQNCLWTLRNLSD, AATKQEGMEGLLGTLVQLLGSDDINVVTCAAGILSNLTC, YKNK…HLTS, EMAQ…NLAL, PANH…QFVE, IHNRIVIRGLNTIPLFVQLLYSPIENIQRVAAGVLCDVAQ, and KEAAEAIEAEGATAPLTELLHSRNEGVATYAAAVLFRMSE. Residues 735–745 are compositionally biased toward basic and acidic residues; the sequence is MDHDMGGHHPG. The segment at 735–781 is disordered; it reads MDHDMGGHHPGADYPVDGLPDLSHAQDLMDGLPPGDSNQLAWFDTDL.

This sequence belongs to the beta-catenin family. Interacts with EP-Cadherin/CDH3. Interacts with custos; the interaction is positively regulated by Wnt stimulation. In terms of processing, phosphorylation by gsk3b promotes ubiquitination and subsequent degradation by the proteasome. Ubiquitinated when phosphorylated by gsk3b, leading to its degradation. As to expression, expressed at intercalated disks in the heart (at protein level).

Its subcellular location is the cytoplasm. The protein localises to the nucleus. The protein resides in the cell membrane. In terms of biological role, key downstream component of the canonical Wnt signaling pathway. In the absence of Wnt, forms a complex with axin1, axin2, apc, csnk1a1 and gsk3b that promotes phosphorylation on N-terminal Ser and Thr residues and ubiquitination of ctnnb1 and its subsequent degradation by the proteasome. In the presence of Wnt ligand, ctnnb1 is not ubiquitinated and accumulates in the nucleus, where it acts as a coactivator for transcription factors of the TCF/LEF family, leading to activate Wnt responsive genes. Plays a key role in dorsoventral patterning: in prospective ventral blastomeres, its down-regulation by axin1 and axin2 leads to inhibit the Wnt signaling pathway, while in prospective dorsal blastomeres, degradation of axin results in stabilization and nuclear translocation of ctnnb1. This chain is Catenin beta-1, found in Xenopus laevis (African clawed frog).